We begin with the raw amino-acid sequence, 493 residues long: Cobyric acid synthase (493 aa).

The region spanning 246-440 (PIDIAVIKMP…IHGVFDGVVF (195 aa)) is the GATase cobBQ-type domain. Catalysis depends on Cys326, which acts as the Nucleophile. The active site involves His432.

The protein belongs to the CobB/CobQ family. CobQ subfamily.

It functions in the pathway cofactor biosynthesis; adenosylcobalamin biosynthesis. In terms of biological role, catalyzes amidations at positions B, D, E, and G on adenosylcobyrinic A,C-diamide. NH(2) groups are provided by glutamine, and one molecule of ATP is hydrogenolyzed for each amidation. The protein is Cobyric acid synthase of Clostridium botulinum (strain Kyoto / Type A2).